The following is a 372-amino-acid chain: Cuticle collagen dpy-10 (372 aa).

The signal sequence occupies residues 1-45; it reads MKNNAKEDYRTFSLTTNYSRQMIYRCVTGLQIGFSLFSFIIVCVA. 3 triple-helical region regions span residues 144 to 173, 195 to 251, and 259 to 324; these read GPPG…PGTT, GPPG…KGPT, and GPPG…PGVC. Residues 144–372 form a disordered region; sequence GPPGPRGSSG…RAGYQGYGRK (229 aa). A compositionally biased stretch (pro residues) spans 185-196; it reads EPPPCRPCPKGP. Low complexity predominate over residues 197-208; the sequence is PGIKGWPGFPGD. 2 stretches are compositionally biased toward gly residues: residues 237–246 and 283–292; these read GYRGGPGAPG and GLTGGQGERG. The segment covering 293-303 has biased composition (low complexity); that stretch reads WPGVSGESGEP. Residues 353–363 show a composition bias toward gly residues; the sequence is GYGGSRGGGDR.

This sequence belongs to the cuticular collagen family. Collagen polypeptide chains are complexed within the cuticle by disulfide bonds and other types of covalent cross-links.

Functionally, nematode cuticles are composed largely of collagen-like proteins. The cuticle functions both as an exoskeleton and as a barrier to protect the worm from its environment. The chain is Cuticle collagen dpy-10 (dpy-10) from Caenorhabditis elegans.